A 610-amino-acid chain; its full sequence is Chaperone protein DnaK (610 aa).

Threonine 173 carries the post-translational modification Phosphothreonine; by autocatalysis. Residues 579 to 592 (QQQQAQGANAGQNN) show a composition bias toward low complexity. The disordered stretch occupies residues 579 to 610 (QQQQAQGANAGQNNDSTVEDAEFKEVKDDDKK). The segment covering 599–610 (AEFKEVKDDDKK) has biased composition (basic and acidic residues).

The protein belongs to the heat shock protein 70 family.

Its function is as follows. Acts as a chaperone. In Staphylococcus aureus (strain bovine RF122 / ET3-1), this protein is Chaperone protein DnaK.